Reading from the N-terminus, the 201-residue chain is Single-stranded DNA-binding protein DdrA (201 aa).

This sequence belongs to the RAD52 family. The truncated form (1-160) of DdrA forms heptameric rings that can assemble into a 3-ring structure.

In terms of biological role, ssDNA-binding protein that contributes to the ionizing radiation resistance of D.deserti. Plays a role in DNA repair and genome reconstitution, in a RecA-independent process, since DdrA is essential for recovery from severe genomic fragmentation as a result of exposure to severe levels of ionizing radiation in an environment lacking nutrients. In vitro, binds to the 3'-ends of single-stranded DNA, and probably protects them from nuclease degradation. Thus, DdrA is part of a DNA end-protection system that helps to preserve genome integrity following irradiation or desiccation. This is Single-stranded DNA-binding protein DdrA (ddrA) from Deinococcus deserti (strain DSM 17065 / CIP 109153 / LMG 22923 / VCD115).